A 171-amino-acid polypeptide reads, in one-letter code: Protein phosphatase 1 regulatory subunit 1A (171 aa).

Position 1 is an N-acetylmethionine (Met-1). The essential for activity stretch occupies residues 9–12; that stretch reads KIQF. The tract at residues 17–171 is disordered; the sequence is LEPHLDPEAA…PLDSQGASLV (155 aa). The segment covering 19–29 has biased composition (basic and acidic residues); sequence PHLDPEAAEQI. Thr-35 carries the post-translational modification Phosphothreonine; by PKA. The essential for activity stretch occupies residues 42-54; it reads TSDQSSPEVDEDR. Residues Ser-43, Ser-46, Ser-47, and Ser-67 each carry the phosphoserine modification. Polar residues predominate over residues 122 to 133; that stretch reads GSASRPDTSGTA. Residues 137–148 show a composition bias toward basic and acidic residues; the sequence is AESKPKTQEQRG. Residues 143–171 are interaction with PPP1R15A; it reads TQEQRGVEPSTEDLSAHMLPLDSQGASLV.

It belongs to the protein phosphatase inhibitor 1 family. As to quaternary structure, interacts with PPP1R15A. Phosphorylation of Thr-35 is required for activity.

Its function is as follows. Inhibitor of protein-phosphatase 1. This protein may be important in hormonal control of glycogen metabolism. Hormones that elevate intracellular cAMP increase I-1 activity in many tissues. I-1 activation may impose cAMP control over proteins that are not directly phosphorylated by PKA. Following a rise in intracellular calcium, I-1 is inactivated by calcineurin (or PP2B). Does not inhibit type-2 phosphatases. In Rattus norvegicus (Rat), this protein is Protein phosphatase 1 regulatory subunit 1A (Ppp1r1a).